The chain runs to 209 residues: ATP-dependent Clp protease proteolytic subunit (209 aa).

S101 serves as the catalytic Nucleophile. Residue H126 is part of the active site.

The protein belongs to the peptidase S14 family. In terms of assembly, component of the chloroplastic Clp protease core complex.

It localises to the plastid. It is found in the chloroplast stroma. The enzyme catalyses Hydrolysis of proteins to small peptides in the presence of ATP and magnesium. alpha-casein is the usual test substrate. In the absence of ATP, only oligopeptides shorter than five residues are hydrolyzed (such as succinyl-Leu-Tyr-|-NHMec, and Leu-Tyr-Leu-|-Tyr-Trp, in which cleavage of the -Tyr-|-Leu- and -Tyr-|-Trp bonds also occurs).. In terms of biological role, cleaves peptides in various proteins in a process that requires ATP hydrolysis. Has a chymotrypsin-like activity. Plays a major role in the degradation of misfolded proteins. This is ATP-dependent Clp protease proteolytic subunit from Huperzia lucidula (Shining clubmoss).